The sequence spans 529 residues: Bifunctional purine biosynthesis protein PurH (529 aa).

Positions 1–148 constitute an MGS-like domain; the sequence is MEQSFLPIRC…KNYKYVTVVV (148 aa).

This sequence belongs to the PurH family.

It carries out the reaction (6R)-10-formyltetrahydrofolate + 5-amino-1-(5-phospho-beta-D-ribosyl)imidazole-4-carboxamide = 5-formamido-1-(5-phospho-D-ribosyl)imidazole-4-carboxamide + (6S)-5,6,7,8-tetrahydrofolate. The enzyme catalyses IMP + H2O = 5-formamido-1-(5-phospho-D-ribosyl)imidazole-4-carboxamide. The protein operates within purine metabolism; IMP biosynthesis via de novo pathway; 5-formamido-1-(5-phospho-D-ribosyl)imidazole-4-carboxamide from 5-amino-1-(5-phospho-D-ribosyl)imidazole-4-carboxamide (10-formyl THF route): step 1/1. Its pathway is purine metabolism; IMP biosynthesis via de novo pathway; IMP from 5-formamido-1-(5-phospho-D-ribosyl)imidazole-4-carboxamide: step 1/1. This Wigglesworthia glossinidia brevipalpis protein is Bifunctional purine biosynthesis protein PurH.